The following is a 262-amino-acid chain: Zinc-finger homeodomain protein 6 (262 aa).

Basic and acidic residues-rich tracts occupy residues 1–25 and 36–47; these read MEVR…DHHR and NKEKPTTKRNGS. Residues 1–93 form a disordered region; sequence MEVREKKDEK…ECQKNHAASS (93 aa). Residues 82 to 131 form a ZF-HD dimerization-type; degenerate zinc finger; sequence YRECQKNHAASSGGHVVDGCGEFMSSGEEGTVESLLCAACDCHRSFHRKE. Residues 198–261 constitute a DNA-binding region (homeobox); it reads KKRFRTKFNE…NNKQAAKKKD (64 aa).

In terms of assembly, homo- and heterodimer with other ZFHD proteins. Interacts with MIF1 and MIF3; these interactions prevent nuclear localization and DNA-binding to inhibit transcription regulation activity. Binds to ZHD1, ZHD2, ZHD10 and ZHD11. As to expression, expressed in seedlings, roots, leaves, stems, flowers and inflorescence.

The protein localises to the nucleus. Its function is as follows. Putative transcription factor. This Arabidopsis thaliana (Mouse-ear cress) protein is Zinc-finger homeodomain protein 6 (ZHD6).